The primary structure comprises 658 residues: Probable rhamnogalacturonate lyase B (658 aa).

The first 19 residues, 1 to 19 (MRFAIPLGAACAWAGVALA), serve as a signal peptide directing secretion. 8 N-linked (GlcNAc...) asparagine glycosylation sites follow: asparagine 110, asparagine 143, asparagine 239, asparagine 280, asparagine 522, asparagine 530, asparagine 592, and asparagine 633.

This sequence belongs to the polysaccharide lyase 4 family.

Its subcellular location is the secreted. The enzyme catalyses Endotype eliminative cleavage of L-alpha-rhamnopyranosyl-(1-&gt;4)-alpha-D-galactopyranosyluronic acid bonds of rhamnogalacturonan I domains in ramified hairy regions of pectin leaving L-rhamnopyranose at the reducing end and 4-deoxy-4,5-unsaturated D-galactopyranosyluronic acid at the non-reducing end.. Functionally, pectinolytic enzymes consist of four classes of enzymes: pectin lyase, polygalacturonase, pectin methylesterase and rhamnogalacturonase. Degrades the rhamnogalacturonan I (RG-I) backbone of pectin. This is Probable rhamnogalacturonate lyase B (rglB) from Aspergillus fumigatus (strain CBS 144.89 / FGSC A1163 / CEA10) (Neosartorya fumigata).